A 259-amino-acid chain; its full sequence is Flagellar L-ring protein (259 aa).

The first 15 residues, 1–15, serve as a signal peptide directing secretion; the sequence is MKRISLIALVTIMSG. Cys16 is lipidated: N-palmitoyl cysteine. Cys16 carries the S-diacylglycerol cysteine lipid modification.

It belongs to the FlgH family. As to quaternary structure, the basal body constitutes a major portion of the flagellar organelle and consists of four rings (L,P,S, and M) mounted on a central rod.

The protein resides in the cell outer membrane. It is found in the bacterial flagellum basal body. Its function is as follows. Assembles around the rod to form the L-ring and probably protects the motor/basal body from shearing forces during rotation. This Vibrio vulnificus (strain CMCP6) protein is Flagellar L-ring protein.